A 168-amino-acid polypeptide reads, in one-letter code: Large ribosomal subunit protein bL17 (168 aa).

The segment covering 121–146 (AEAEGGEEKAEQKTEKKAAKAKEPKA) has biased composition (basic and acidic residues). A disordered region spans residues 121–168 (AEAEGGEEKAEQKTEKKAAKAKEPKAAKAPKKAAAKPKAKAEKKGAEE). A compositionally biased stretch (basic residues) spans 148–158 (KAPKKAAAKPK). Basic and acidic residues predominate over residues 159–168 (AKAEKKGAEE).

It belongs to the bacterial ribosomal protein bL17 family. As to quaternary structure, part of the 50S ribosomal subunit. Contacts protein L32.

The sequence is that of Large ribosomal subunit protein bL17 from Anaeromyxobacter sp. (strain Fw109-5).